A 148-amino-acid chain; its full sequence is UPF0756 membrane protein ETA_17460 (148 aa).

The next 4 helical transmembrane spans lie at 14–34 (ALSY…LIVI), 51–71 (MTVG…SGTI), 80–100 (FLHW…WLGG), and 112–132 (VVGG…GVPV).

The protein belongs to the UPF0756 family.

It is found in the cell membrane. The chain is UPF0756 membrane protein ETA_17460 from Erwinia tasmaniensis (strain DSM 17950 / CFBP 7177 / CIP 109463 / NCPPB 4357 / Et1/99).